The chain runs to 253 residues: Phosphate import ATP-binding protein PstB (253 aa).

Residues 5-248 enclose the ABC transporter domain; that stretch reads IETINLHVYY…PEHELTEKYV (244 aa). Position 37–44 (37–44) interacts with ATP; that stretch reads GPSGCGKS.

The protein belongs to the ABC transporter superfamily. Phosphate importer (TC 3.A.1.7) family. As to quaternary structure, the complex is composed of two ATP-binding proteins (PstB), two transmembrane proteins (PstC and PstA) and a solute-binding protein (PstS).

Its subcellular location is the cell membrane. The enzyme catalyses phosphate(out) + ATP + H2O = ADP + 2 phosphate(in) + H(+). Functionally, part of the ABC transporter complex PstSACB involved in phosphate import. Responsible for energy coupling to the transport system. In Pyrococcus furiosus (strain ATCC 43587 / DSM 3638 / JCM 8422 / Vc1), this protein is Phosphate import ATP-binding protein PstB.